The following is a 308-amino-acid chain: Tryptophan 2,3-dioxygenase (308 aa).

The segment at 1 to 37 (MKPPGDNAPAGCPFSGARAAQPAHEAPHVPGDAAGET) is disordered. Residues 77 to 81 (FIIQH), Tyr139, and Arg143 each bind substrate. Heme is bound at residue His266. Thr280 is a substrate binding site.

The protein belongs to the tryptophan 2,3-dioxygenase family. In terms of assembly, homotetramer. Heme serves as cofactor.

It carries out the reaction L-tryptophan + O2 = N-formyl-L-kynurenine. The protein operates within amino-acid degradation; L-tryptophan degradation via kynurenine pathway; L-kynurenine from L-tryptophan: step 1/2. Functionally, heme-dependent dioxygenase that catalyzes the oxidative cleavage of the L-tryptophan (L-Trp) pyrrole ring and converts L-tryptophan to N-formyl-L-kynurenine. Catalyzes the oxidative cleavage of the indole moiety. This chain is Tryptophan 2,3-dioxygenase, found in Burkholderia ambifaria (strain MC40-6).